The primary structure comprises 229 residues: Cytidylate kinase (229 aa).

12–20 (GPSGSGKGT) lines the ATP pocket.

This sequence belongs to the cytidylate kinase family. Type 1 subfamily.

The protein resides in the cytoplasm. The catalysed reaction is CMP + ATP = CDP + ADP. The enzyme catalyses dCMP + ATP = dCDP + ADP. This chain is Cytidylate kinase, found in Pseudomonas syringae pv. syringae (strain B728a).